Consider the following 367-residue polypeptide: UDP-N-acetylglucosamine--N-acetylmuramyl-(pentapeptide) pyrophosphoryl-undecaprenol N-acetylglucosamine transferase (367 aa).

UDP-N-acetyl-alpha-D-glucosamine is bound by residues 15–17 (TGG), Asn-126, Arg-169, Ser-197, and Gln-298.

It belongs to the glycosyltransferase 28 family. MurG subfamily.

The protein localises to the cell inner membrane. The enzyme catalyses di-trans,octa-cis-undecaprenyl diphospho-N-acetyl-alpha-D-muramoyl-L-alanyl-D-glutamyl-meso-2,6-diaminopimeloyl-D-alanyl-D-alanine + UDP-N-acetyl-alpha-D-glucosamine = di-trans,octa-cis-undecaprenyl diphospho-[N-acetyl-alpha-D-glucosaminyl-(1-&gt;4)]-N-acetyl-alpha-D-muramoyl-L-alanyl-D-glutamyl-meso-2,6-diaminopimeloyl-D-alanyl-D-alanine + UDP + H(+). Its pathway is cell wall biogenesis; peptidoglycan biosynthesis. Cell wall formation. Catalyzes the transfer of a GlcNAc subunit on undecaprenyl-pyrophosphoryl-MurNAc-pentapeptide (lipid intermediate I) to form undecaprenyl-pyrophosphoryl-MurNAc-(pentapeptide)GlcNAc (lipid intermediate II). In Bradyrhizobium sp. (strain BTAi1 / ATCC BAA-1182), this protein is UDP-N-acetylglucosamine--N-acetylmuramyl-(pentapeptide) pyrophosphoryl-undecaprenol N-acetylglucosamine transferase.